The following is a 211-amino-acid chain: Methylthioribulose-1-phosphate dehydratase (211 aa).

2 residues coordinate Zn(2+): His-94 and His-96.

It belongs to the aldolase class II family. MtnB subfamily. It depends on Zn(2+) as a cofactor.

It carries out the reaction 5-(methylsulfanyl)-D-ribulose 1-phosphate = 5-methylsulfanyl-2,3-dioxopentyl phosphate + H2O. The protein operates within amino-acid biosynthesis; L-methionine biosynthesis via salvage pathway; L-methionine from S-methyl-5-thio-alpha-D-ribose 1-phosphate: step 2/6. Functionally, catalyzes the dehydration of methylthioribulose-1-phosphate (MTRu-1-P) into 2,3-diketo-5-methylthiopentyl-1-phosphate (DK-MTP-1-P). In Pseudoalteromonas translucida (strain TAC 125), this protein is Methylthioribulose-1-phosphate dehydratase.